Reading from the N-terminus, the 284-residue chain is Polyamine aminopropyltransferase (284 aa).

The PABS domain maps to 2-237 (ELWYTEQHTE…GHWLFGFASK (236 aa)). S-methyl-5'-thioadenosine is bound at residue Q31. Residues H62 and D86 each coordinate spermidine. Residues E106 and 137–138 (DG) each bind S-methyl-5'-thioadenosine. D155 acts as the Proton acceptor in catalysis. 155 to 158 (DSTD) contacts spermidine. P162 is a binding site for S-methyl-5'-thioadenosine.

It belongs to the spermidine/spermine synthase family. In terms of assembly, homodimer or homotetramer.

It is found in the cytoplasm. It carries out the reaction S-adenosyl 3-(methylsulfanyl)propylamine + putrescine = S-methyl-5'-thioadenosine + spermidine + H(+). The protein operates within amine and polyamine biosynthesis; spermidine biosynthesis; spermidine from putrescine: step 1/1. Its function is as follows. Catalyzes the irreversible transfer of a propylamine group from the amino donor S-adenosylmethioninamine (decarboxy-AdoMet) to putrescine (1,4-diaminobutane) to yield spermidine. The chain is Polyamine aminopropyltransferase from Alkaliphilus oremlandii (strain OhILAs) (Clostridium oremlandii (strain OhILAs)).